Here is a 354-residue protein sequence, read N- to C-terminus: Guanine nucleotide-binding protein G(i) subunit alpha-1 (354 aa).

Residue G2 is the site of N-myristoyl glycine attachment. The S-palmitoyl cysteine moiety is linked to residue C3. Positions 32-354 constitute a G-alpha domain; sequence REVKLLLLGA…KNNLKDCGLF (323 aa). A G1 motif region spans residues 35-48; sequence KLLLLGAGESGKST. Residues 43–48, 150–151, and 175–178 each bind GTP; these read ESGKST, DS, and LRTR. S47 provides a ligand contact to Mg(2+). The segment at 173-181 is G2 motif; sequence DVLRTRVKT. T181 is a Mg(2+) binding site. Residues 196-205 form a G3 motif region; the sequence is FKMFDVGGQR. GTP is bound by residues 200-204, 269-272, and A326; these read DVGGQ and NKKD. Residues 265 to 272 are G4 motif; that stretch reads ILFLNKKD. The tract at residues 324–329 is G5 motif; sequence TCATDT.

The protein belongs to the G-alpha family. G(i/o/t/z) subfamily. Heterotrimeric G proteins are composed of 3 units; alpha, beta and gamma. The alpha chain contains the guanine nucleotide binding site. Part of a spindle orientation complex at least composed of GNAI1, GPSM2 and NUMA1. Identified in complex with the beta subunit GNB1 and the gamma subunit GNG1. Identified in complex with the beta subunit GNB1 and the gamma subunit GNG2. Component of the TAS2R14-GNAI1 complex, consisting of TAS2R14, GNAI1, GNB1 and GNG2; within the complex interacts with TAS2R14; this complex plays a role in the perception of bitterness. GTP binding causes dissociation of the heterotrimer, liberating the individual subunits so that they can interact with downstream effector proteins. Interacts (GDP-bound form) with GPSM1; this inhibits guanine nucleotide exchange and GTP binding. Interacts (GDP-bound form) with GPSM2 (via GoLoco domains); this inhibits guanine nucleotide exchange. Interacts with RGS10; this strongly enhances GTP hydrolysis. Interacts with RGS1 and RGS16; this strongly enhances GTPase activity. Interacts with RGS4. Interacts with RGS12. Interacts (via active GTP- or inactive GDP-bound forms) with RGS14 (via RGS and GoLoco domains). Interacts with RGS3, RGS6, RGS7, RGS8, RGS17, RGS18 and RGS20 (in vitro). Interacts (GDP-bound form) with RIC8A (via C-terminus); promoting GNAI1 folding and association with the plasma membrane. Interacts (inactive GDP-bound form) with NUCB1 (via GBA motif); the interaction leads to activation of GNAI1. Interacts (inactive GDP-bound form) with CCDC88C/DAPLE (via GBA motif); the interaction leads to activation of GNAI1. Interacts (inactive GDP-bound form) with CCDC8A/GIV (via GBA motif). Interacts with GPR15. Post-translationally, myristoylation at Gly-2 is required for membrane anchoring before palmitoylation. In terms of processing, palmitoylation at Cys-3 varies with membrane lipid composition.

Its subcellular location is the nucleus. The protein resides in the cytoplasm. It localises to the cell membrane. It is found in the cytoskeleton. The protein localises to the microtubule organizing center. Its subcellular location is the centrosome. The protein resides in the cell cortex. It localises to the membrane. Guanine nucleotide-binding proteins (G proteins) function as transducers downstream of G protein-coupled receptors (GPCRs) in numerous signaling cascades. The alpha chain contains the guanine nucleotide binding site and alternates between an active, GTP-bound state and an inactive, GDP-bound state. Signaling by an activated GPCR promotes GDP release and GTP binding. The alpha subunit has a low GTPase activity that converts bound GTP to GDP, thereby terminating the signal. Both GDP release and GTP hydrolysis are modulated by numerous regulatory proteins. Signaling is mediated via effector proteins, such as adenylate cyclase. Inhibits adenylate cyclase activity of ADCY1, ADCY5 and ADCY6, leading to decreased intracellular cAMP levels. The inactive GDP-bound form prevents the association of RGS14 with centrosomes and is required for the translocation of RGS14 from the cytoplasm to the plasma membrane. Required for normal cytokinesis during mitosis. Required for cortical dynein-dynactin complex recruitment during metaphase. The sequence is that of Guanine nucleotide-binding protein G(i) subunit alpha-1 (GNAI1) from Pongo abelii (Sumatran orangutan).